Reading from the N-terminus, the 363-residue chain is Protein CPn_1058/CP_0792/CPj1058/CpB1100 (363 aa).

Positions 1-27 (MKLYQTLRGIVLVSTGCIFLGMHGGYA) are cleaved as a signal peptide.

It belongs to the chlamydial CPn_1058/CT_355/TC_0634 family.

In Chlamydia pneumoniae (Chlamydophila pneumoniae), this protein is Protein CPn_1058/CP_0792/CPj1058/CpB1100.